A 678-amino-acid polypeptide reads, in one-letter code: UvrABC system protein B (678 aa).

Residues 31–417 form the Helicase ATP-binding domain; the sequence is EGLENGLAHQ…KSGGEIIDQV (387 aa). Position 44–51 (44–51) interacts with ATP; it reads GVTGSGKT. The short motif at 97–120 is the Beta-hairpin element; that stretch reads YYDYYQPEAYVPSSDTFIEKDASI. Positions 436–589 constitute a Helicase C-terminal domain; it reads QVDDLLSEAR…QMKYNEARGI (154 aa). The UVR domain maps to 638-673; that stretch reads QQQIKKLEQQMYKYAQDLEFEKAAAVRDQLQQLREH.

This sequence belongs to the UvrB family. Forms a heterotetramer with UvrA during the search for lesions. Interacts with UvrC in an incision complex.

The protein localises to the cytoplasm. Functionally, the UvrABC repair system catalyzes the recognition and processing of DNA lesions. A damage recognition complex composed of 2 UvrA and 2 UvrB subunits scans DNA for abnormalities. Upon binding of the UvrA(2)B(2) complex to a putative damaged site, the DNA wraps around one UvrB monomer. DNA wrap is dependent on ATP binding by UvrB and probably causes local melting of the DNA helix, facilitating insertion of UvrB beta-hairpin between the DNA strands. Then UvrB probes one DNA strand for the presence of a lesion. If a lesion is found the UvrA subunits dissociate and the UvrB-DNA preincision complex is formed. This complex is subsequently bound by UvrC and the second UvrB is released. If no lesion is found, the DNA wraps around the other UvrB subunit that will check the other stand for damage. In Pasteurella multocida (strain Pm70), this protein is UvrABC system protein B.